Here is a 364-residue protein sequence, read N- to C-terminus: DNA polymerase IV (364 aa).

One can recognise a UmuC domain in the interval 7–187 (IIHVDMDAFY…LPVNRVPGVG (181 aa)). Mg(2+)-binding residues include aspartate 11 and aspartate 105. The active site involves glutamate 106.

It belongs to the DNA polymerase type-Y family. In terms of assembly, monomer. It depends on Mg(2+) as a cofactor.

The protein localises to the cytoplasm. It catalyses the reaction DNA(n) + a 2'-deoxyribonucleoside 5'-triphosphate = DNA(n+1) + diphosphate. Its function is as follows. Poorly processive, error-prone DNA polymerase involved in untargeted mutagenesis. Copies undamaged DNA at stalled replication forks, which arise in vivo from mismatched or misaligned primer ends. These misaligned primers can be extended by PolIV. Exhibits no 3'-5' exonuclease (proofreading) activity. May be involved in translesional synthesis, in conjunction with the beta clamp from PolIII. The sequence is that of DNA polymerase IV from Stenotrophomonas maltophilia (strain K279a).